We begin with the raw amino-acid sequence, 446 residues long: 3-phosphoshikimate 1-carboxyvinyltransferase (446 aa).

The 3-phosphoshikimate site is built by K21, S22, and R26. K21 is a phosphoenolpyruvate binding site. Phosphoenolpyruvate contacts are provided by G92 and R120. 3-phosphoshikimate contacts are provided by S165, Q166, D308, and K335. Q166 contacts phosphoenolpyruvate. The active-site Proton acceptor is the D308. Phosphoenolpyruvate is bound by residues R339, R380, and K406.

It belongs to the EPSP synthase family. As to quaternary structure, monomer.

The protein localises to the cytoplasm. It catalyses the reaction 3-phosphoshikimate + phosphoenolpyruvate = 5-O-(1-carboxyvinyl)-3-phosphoshikimate + phosphate. Its pathway is metabolic intermediate biosynthesis; chorismate biosynthesis; chorismate from D-erythrose 4-phosphate and phosphoenolpyruvate: step 6/7. Functionally, catalyzes the transfer of the enolpyruvyl moiety of phosphoenolpyruvate (PEP) to the 5-hydroxyl of shikimate-3-phosphate (S3P) to produce enolpyruvyl shikimate-3-phosphate and inorganic phosphate. The protein is 3-phosphoshikimate 1-carboxyvinyltransferase of Chlamydia caviae (strain ATCC VR-813 / DSM 19441 / 03DC25 / GPIC) (Chlamydophila caviae).